Here is a 338-residue protein sequence, read N- to C-terminus: Malate dehydrogenase, mitochondrial (338 aa).

Residues 1-24 (MLSALARPASAALRRSFSTSAQNN) constitute a mitochondrion transit peptide. NAD(+) is bound by residues 31–37 (GASGGIG) and aspartate 57. Residue serine 33 is glycosylated (O-linked (GlcNAc) serine). 2 positions are modified to N6-acetyllysine; alternate: lysine 78 and lysine 91. Residues lysine 78 and lysine 91 each carry the N6-succinyllysine; alternate modification. Substrate contacts are provided by arginine 104 and arginine 110. Residues asparagine 117 and 140 to 142 (IAN) each bind NAD(+). Asparagine 142 lines the substrate pocket. Lysine 165 bears the N6-acetyllysine mark. Arginine 176 contacts substrate. N6-acetyllysine; alternate is present on lysine 185. N6-succinyllysine; alternate is present on lysine 185. The active-site Proton acceptor is the histidine 200. An N6-succinyllysine modification is found at lysine 203. N6-acetyllysine; alternate is present on residues lysine 215 and lysine 239. An N6-succinyllysine; alternate mark is found at lysine 215 and lysine 239. Lysine 239 carries the N6-malonyllysine; alternate modification. Position 246 is a phosphoserine (serine 246). NAD(+) is bound at residue methionine 251. Lysine 269 bears the N6-succinyllysine mark. N6-acetyllysine; alternate occurs at positions 296, 301, 314, and 324. An N6-succinyllysine; alternate mark is found at lysine 296, lysine 301, lysine 314, and lysine 324. Serine 326 is subject to Phosphoserine. N6-acetyllysine; alternate is present on residues lysine 328, lysine 329, and lysine 335. N6-succinyllysine; alternate is present on lysine 328. Position 329 is an N6-malonyllysine; alternate (lysine 329). Lysine 335 bears the N6-succinyllysine; alternate mark.

The protein belongs to the LDH/MDH superfamily. MDH type 1 family. Homodimer. Post-translationally, acetylation is enhanced after treatment either with trichostin A (TCA) or with nicotinamide (NAM) with the appearance of tri- and tetraacetylations. Glucose also increases acetylation.

It is found in the mitochondrion matrix. The catalysed reaction is (S)-malate + NAD(+) = oxaloacetate + NADH + H(+). Enzyme activity is enhanced by acetylation. In Macaca fascicularis (Crab-eating macaque), this protein is Malate dehydrogenase, mitochondrial (MDH2).